Reading from the N-terminus, the 582-residue chain is PX domain-containing protein kinase-like protein (582 aa).

Residues 14–126 (LDDTVPLTAA…KFLDPNNYSA (113 aa)) form the PX domain. The 394-residue stretch at 88 to 481 (FIAERQRGLQ…VENSEEQPVK (394 aa)) folds into the Protein kinase domain. The tract at residues 433-550 (EQKQIHQHRR…APFLPQPVNG (118 aa)) is disordered. 2 stretches are compositionally biased toward basic residues: residues 437-448 (IHQHRRLTRAQS) and 457-469 (KRRK…KSKR). The span at 483–514 (SNSNNSAGSGASSPLTSPSSPTPPSTAGLSSA) shows a compositional bias: low complexity. The segment covering 515–531 (LPPPPPPPPPPPPPAGP) has biased composition (pro residues). The WH2 domain occupies 548–567 (VNGVNRGALLSSIQNFQKGT).

It belongs to the protein kinase superfamily. In terms of tissue distribution, isoform 1 is present in all tissues examined. Isoform 2 is found in all tissues except skeletal muscle and very low levels in spleen. Both isoforms are widely expressed throughout the nervous system however levels of isoform 2 are higher in purified hippocampal and cortical neurons whereas glial cells express more isoform 1 than isoform 2.

It localises to the cytoplasm. The protein resides in the cell membrane. Functionally, binds to and modulates brain Na,K-ATPase subunits ATP1B1 and ATP1B3 and may thereby participate in the regulation of electrical excitability and synaptic transmission. May not display kinase activity. The protein is PX domain-containing protein kinase-like protein of Mus musculus (Mouse).